The primary structure comprises 212 residues: 3-isopropylmalate dehydratase small subunit (212 aa).

This sequence belongs to the LeuD family. LeuD type 1 subfamily. As to quaternary structure, heterodimer of LeuC and LeuD.

It catalyses the reaction (2R,3S)-3-isopropylmalate = (2S)-2-isopropylmalate. It functions in the pathway amino-acid biosynthesis; L-leucine biosynthesis; L-leucine from 3-methyl-2-oxobutanoate: step 2/4. Its function is as follows. Catalyzes the isomerization between 2-isopropylmalate and 3-isopropylmalate, via the formation of 2-isopropylmaleate. This Nitrosomonas eutropha (strain DSM 101675 / C91 / Nm57) protein is 3-isopropylmalate dehydratase small subunit.